Reading from the N-terminus, the 255-residue chain is Probable membrane transporter protein HI_0198 (255 aa).

8 helical membrane-spanning segments follow: residues 7-27 (LLAILFCVGFVASFIDAIAGG), 28-48 (GGLITIPALLMTGMPPAMALG), 76-96 (IWFILIWVFLGSALGTLLIQS), 99-119 (VAIFKKMLPFLILAIGLYFLF), 132-152 (LSYLLFGLLVSPFLGFYDGFF), 153-173 (GPGTGSIMSLACVTLLGFNLP), 191-211 (FALFLLGGQILWKVGFVMMAG), and 235-255 (VVIMSFMMTAKMVYDQGWFHF).

Belongs to the 4-toluene sulfonate uptake permease (TSUP) (TC 2.A.102) family.

The protein resides in the cell membrane. The sequence is that of Probable membrane transporter protein HI_0198 from Haemophilus influenzae (strain ATCC 51907 / DSM 11121 / KW20 / Rd).